The sequence spans 149 residues: Calmodulin (149 aa).

4 consecutive EF-hand domains span residues 8-43 (EQIA…LGQN), 44-79 (PTEA…KMAD), 81-116 (DTEE…LGEK), and 117-149 (LSDE…MLSK). Ca(2+)-binding residues include D21, D23, D25, N27, E32, D57, D59, N61, T63, E68, D94, D96, N98, and E105. N6,N6,N6-trimethyllysine is present on K116. Ca(2+) is bound by residues D130, D132, D134, Q136, and E141.

Belongs to the calmodulin family.

Its function is as follows. Calmodulin mediates the control of a large number of enzymes, ion channels and other proteins by Ca(2+). Among the enzymes to be stimulated by the calmodulin-Ca(2+) complex are a number of protein kinases and phosphatases. The sequence is that of Calmodulin from Physarum polycephalum (Slime mold).